The chain runs to 548 residues: Mercuric reductase (548 aa).

Residues methionine 1–serine 65 enclose the HMA domain. A metal cation-binding residues include cysteine 11 and cysteine 14. FAD contacts are provided by alanine 97, glycine 117, and threonine 122. A disulfide bridge connects residues cysteine 123 and cysteine 128. Positions 132, 198, 390, and 398 each coordinate FAD. Hg(2+)-binding residues include cysteine 545 and cysteine 546.

The protein belongs to the class-I pyridine nucleotide-disulfide oxidoreductase family. In terms of assembly, homodimer. The cofactor is FAD.

The catalysed reaction is Hg + NADP(+) + H(+) = Hg(2+) + NADPH. Functionally, resistance to Hg(2+) in bacteria appears to be governed by a specialized system which includes mercuric reductase. MerA protein is responsible for volatilizing mercury as Hg(0). The chain is Mercuric reductase (merA) from Pseudomonas fluorescens.